Reading from the N-terminus, the 287-residue chain is Large ribosomal subunit protein uL2 (287 aa).

Residues 221–287 (RGSVMNPCDH…SKRSRGGRDS (67 aa)) form a disordered region. Residues 258 to 287 (KTRKRNKPSNKFVLRKRRKTSKRSRGGRDS) show a composition bias toward basic residues.

The protein belongs to the universal ribosomal protein uL2 family. As to quaternary structure, part of the 50S ribosomal subunit. Forms a bridge to the 30S subunit in the 70S ribosome.

In terms of biological role, one of the primary rRNA binding proteins. Required for association of the 30S and 50S subunits to form the 70S ribosome, for tRNA binding and peptide bond formation. It has been suggested to have peptidyltransferase activity; this is somewhat controversial. Makes several contacts with the 16S rRNA in the 70S ribosome. This is Large ribosomal subunit protein uL2 from Synechococcus sp. (strain CC9311).